We begin with the raw amino-acid sequence, 85 residues long: HssA/B-like protein 59 (85 aa).

It belongs to the hssA/B family.

This Dictyostelium discoideum (Social amoeba) protein is HssA/B-like protein 59 (hssl59).